The primary structure comprises 366 residues: GTP cyclohydrolase 1 type 2 homolog (366 aa).

Zn(2+) is bound by residues H64, H65, D102, H326, and E329.

The protein belongs to the GTP cyclohydrolase I type 2/NIF3 family. Homohexamer.

In Staphylococcus aureus (strain MSSA476), this protein is GTP cyclohydrolase 1 type 2 homolog.